Here is a 167-residue protein sequence, read N- to C-terminus: Putative 4-hydroxy-4-methyl-2-oxoglutarate aldolase (167 aa).

Substrate is bound by residues 81 to 84 (GDII) and arginine 103. Aspartate 104 serves as a coordination point for a divalent metal cation.

This sequence belongs to the class II aldolase/RraA-like family. As to quaternary structure, homotrimer. It depends on a divalent metal cation as a cofactor.

It carries out the reaction 4-hydroxy-4-methyl-2-oxoglutarate = 2 pyruvate. The catalysed reaction is oxaloacetate + H(+) = pyruvate + CO2. Its function is as follows. Catalyzes the aldol cleavage of 4-hydroxy-4-methyl-2-oxoglutarate (HMG) into 2 molecules of pyruvate. Also contains a secondary oxaloacetate (OAA) decarboxylase activity due to the common pyruvate enolate transition state formed following C-C bond cleavage in the retro-aldol and decarboxylation reactions. This is Putative 4-hydroxy-4-methyl-2-oxoglutarate aldolase from Corynebacterium jeikeium (strain K411).